The primary structure comprises 54 residues: ATP synthase protein 8 (54 aa).

A helical membrane pass occupies residues 8–28 (WWIINFFIIWTAILLTLVILV).

This sequence belongs to the ATPase protein 8 family. F-type ATPases have 2 components, CF(1) - the catalytic core - and CF(0) - the membrane proton channel.

The protein resides in the mitochondrion membrane. Mitochondrial membrane ATP synthase (F(1)F(0) ATP synthase or Complex V) produces ATP from ADP in the presence of a proton gradient across the membrane which is generated by electron transport complexes of the respiratory chain. F-type ATPases consist of two structural domains, F(1) - containing the extramembraneous catalytic core and F(0) - containing the membrane proton channel, linked together by a central stalk and a peripheral stalk. During catalysis, ATP synthesis in the catalytic domain of F(1) is coupled via a rotary mechanism of the central stalk subunits to proton translocation. Part of the complex F(0) domain. Minor subunit located with subunit a in the membrane. This Paracentrotus lividus (Common sea urchin) protein is ATP synthase protein 8 (MT-ATP8).